The primary structure comprises 62 residues: MGKQCYVTGRKASTGNRRSHALNSTKRRWNANLQKVRILVDGKPKKVWVSARALKSGKVTRV.

The disordered stretch occupies residues 1-23 (MGKQCYVTGRKASTGNRRSHALN).

This sequence belongs to the bacterial ribosomal protein bL28 family.

In Staphylococcus carnosus (strain TM300), this protein is Large ribosomal subunit protein bL28.